A 350-amino-acid chain; its full sequence is Histidinol-phosphate aminotransferase 2 (350 aa).

N6-(pyridoxal phosphate)lysine is present on Lys-210.

This sequence belongs to the class-II pyridoxal-phosphate-dependent aminotransferase family. Histidinol-phosphate aminotransferase subfamily. Homodimer. Pyridoxal 5'-phosphate is required as a cofactor.

It catalyses the reaction L-histidinol phosphate + 2-oxoglutarate = 3-(imidazol-4-yl)-2-oxopropyl phosphate + L-glutamate. It functions in the pathway amino-acid biosynthesis; L-histidine biosynthesis; L-histidine from 5-phospho-alpha-D-ribose 1-diphosphate: step 7/9. This Mannheimia succiniciproducens (strain KCTC 0769BP / MBEL55E) protein is Histidinol-phosphate aminotransferase 2.